The sequence spans 177 residues: Dual-action ribosomal maturation protein DarP (177 aa).

The protein belongs to the DarP family.

It localises to the cytoplasm. In terms of biological role, member of a network of 50S ribosomal subunit biogenesis factors which assembles along the 30S-50S interface, preventing incorrect 23S rRNA structures from forming. Promotes peptidyl transferase center (PTC) maturation. This Histophilus somni (strain 129Pt) (Haemophilus somnus) protein is Dual-action ribosomal maturation protein DarP.